Consider the following 299-residue polypeptide: Taste receptor type 2 member 50 (299 aa).

A topological domain (extracellular) is located at residue Met-1. The helical transmembrane segment at Ile-2–Phe-22 threads the bilayer. Residues Ala-23–Arg-55 are Cytoplasmic-facing. The helical transmembrane segment at Ile-56–Tyr-76 threads the bilayer. Residues Ser-77 to Ala-87 are Extracellular-facing. The helical transmembrane segment at Trp-88–Leu-108 threads the bilayer. The Cytoplasmic portion of the chain corresponds to Lys-109–Arg-126. Residues Ser-127 to Ala-147 form a helical membrane-spanning segment. Topologically, residues Asn-148 to Thr-181 are extracellular. Asn-161 is a glycosylation site (N-linked (GlcNAc...) asparagine). A helical membrane pass occupies residues Leu-182–Leu-202. The Cytoplasmic portion of the chain corresponds to Cys-203 to Gln-229. Residues Thr-230–Trp-250 form a helical membrane-spanning segment. Residues Ser-251–Pro-259 are Extracellular-facing. The helical transmembrane segment at Val-260–Ile-280 threads the bilayer. The Cytoplasmic segment spans residues Trp-281–Cys-299.

This sequence belongs to the G-protein coupled receptor T2R family.

It localises to the membrane. In terms of biological role, receptor that may play a role in the perception of bitterness and is gustducin-linked. May play a role in sensing the chemical composition of the gastrointestinal content. The activity of this receptor may stimulate alpha gustducin, mediate PLC-beta-2 activation and lead to the gating of TRPM5. The sequence is that of Taste receptor type 2 member 50 (TAS2R50) from Pan paniscus (Pygmy chimpanzee).